A 356-amino-acid polypeptide reads, in one-letter code: Peptide chain release factor 1 (356 aa).

Glutamine 234 carries the N5-methylglutamine modification.

The protein belongs to the prokaryotic/mitochondrial release factor family. In terms of processing, methylated by PrmC. Methylation increases the termination efficiency of RF1.

It is found in the cytoplasm. Its function is as follows. Peptide chain release factor 1 directs the termination of translation in response to the peptide chain termination codons UAG and UAA. The chain is Peptide chain release factor 1 from Parafrankia sp. (strain EAN1pec).